A 138-amino-acid polypeptide reads, in one-letter code: MRHRKAGRHLNRDNAHRKAMFKNLAAALFREEEIRTTVPKAKELRRVAEPLITLAKEDTTANRRLAFARLRDKEMVTKLFEELGPHFKERPGGYMRILRCGFRKGDGAPMALVQLVDREEAIAARRETEEDAEETAEA.

Belongs to the bacterial ribosomal protein bL17 family. As to quaternary structure, part of the 50S ribosomal subunit. Contacts protein L32.

This chain is Large ribosomal subunit protein bL17, found in Halorhodospira halophila (strain DSM 244 / SL1) (Ectothiorhodospira halophila (strain DSM 244 / SL1)).